The chain runs to 175 residues: Type-2 ice-structuring protein (175 aa).

Positions 1-16 (MLAALLVCAMVALTRA) are cleaved as a signal peptide. The propeptide occupies 17–33 (ANGDTGKEAVMTGSSGK). In terms of domain architecture, C-type lectin spans 36–163 (TECPTDWKMF…LHASVCAKPA (128 aa)). Disulfide bonds link Cys38-Cys49, Cys66-Cys159, Cys103-Cys134, Cys123-Cys145, and Cys135-Cys151.

Its subcellular location is the secreted. Functionally, antifreeze proteins lower the blood freezing point. The sequence is that of Type-2 ice-structuring protein from Osmerus mordax (Rainbow smelt).